The chain runs to 482 residues: MAALMTPGTGAPPAPGDFSGEGSQGLPDPSPEPKQLPELIRMKRDGGRLSEADIRGFVAAVVNGSAQGAQIGAMLMAIRLRGMDLEETSVLTQALAQSGQQLEWPEAWRQQLVDKHSTGGVGDKVSLVLAPALAACGCKVPMISGRGLGHTGGTLDKLESIPGFNVIQSPEQMQVLLDQAGCCIVGQSEQLVPADGILYAARDVTATVDSLPLITASILSKKLVEGLSALVVDVKFGGAAVFPNQEQARELAKTLVGVGASLGLRVAAALTAMDKPLGRCVGHALEVEEALLCMDGAGPPDLRDLVTTLGGALLWLSGHAGTQAQGAARVAAALDDGSALGRFERMLAAQGVDPGLARALCSGSPAERRQLLPRAREQEELLAPADGTVELVRALPLALVLHELGAGRSRAGEPLRLGVGAELLVDVGQRLRRGTPWLRVHRDGPALSGPQSRALQEALVLSDRAPFAAPSPFAELVLPPQQ.

The propeptide occupies 1-10; it reads MAALMTPGTG. The tract at residues 1–36 is disordered; sequence MAALMTPGTGAPPAPGDFSGEGSQGLPDPSPEPKQL. Position 6 is a phosphothreonine (Thr6). Substrate-binding residues include His116, Arg202, Ser217, and Lys221. 2 R-V-A-A-A-L-X(5,6)-L-G-R repeats span residues 265–279 and 329–342; these read RVAA…PLGR and RVAA…ALGR. R-A-L-X-X-A-L-V-L repeat units follow at residues 393-401 and 453-461; these read RALPLALVL and RALQEALVL.

It belongs to the thymidine/pyrimidine-nucleoside phosphorylase family. As to quaternary structure, homodimer.

It catalyses the reaction thymidine + phosphate = 2-deoxy-alpha-D-ribose 1-phosphate + thymine. Its pathway is pyrimidine metabolism; dTMP biosynthesis via salvage pathway; dTMP from thymine: step 1/2. May have a role in maintaining the integrity of the blood vessels. Has growth promoting activity on endothelial cells, angiogenic activity in vivo and chemotactic activity on endothelial cells in vitro. In terms of biological role, catalyzes the reversible phosphorolysis of thymidine. The produced molecules are then utilized as carbon and energy sources or in the rescue of pyrimidine bases for nucleotide synthesis. This is Thymidine phosphorylase from Homo sapiens (Human).